Here is a 337-residue protein sequence, read N- to C-terminus: tRNA N6-adenosine threonylcarbamoyltransferase (337 aa).

His111 and His115 together coordinate Fe cation. Substrate contacts are provided by residues 134–138 (LVSGG), Asp167, Gly180, and Asn272. Residue Asp300 coordinates Fe cation.

Belongs to the KAE1 / TsaD family. Fe(2+) is required as a cofactor.

It localises to the cytoplasm. The catalysed reaction is L-threonylcarbamoyladenylate + adenosine(37) in tRNA = N(6)-L-threonylcarbamoyladenosine(37) in tRNA + AMP + H(+). Functionally, required for the formation of a threonylcarbamoyl group on adenosine at position 37 (t(6)A37) in tRNAs that read codons beginning with adenine. Is involved in the transfer of the threonylcarbamoyl moiety of threonylcarbamoyl-AMP (TC-AMP) to the N6 group of A37, together with TsaE and TsaB. TsaD likely plays a direct catalytic role in this reaction. This is tRNA N6-adenosine threonylcarbamoyltransferase from Shewanella amazonensis (strain ATCC BAA-1098 / SB2B).